The primary structure comprises 495 residues: Myocyte-specific enhancer factor 2A (495 aa).

The region spanning 3–57 (RKKIQITRIMDERNRQVTFTKRKFGLMKKAYELSVLCDCEIALIIFNSSNKLFQY) is the MADS-box domain. Positions 58–86 (ASTDMDKVLLKYTEYNEPHESRTNSDIVE) form a DNA-binding region, mef2-type. At serine 59 the chain carries Phosphoserine; by CK2. Position 98 is a phosphoserine (serine 98). A disordered region spans residues 175–225 (AESSMLSPPPATLHRNVSPGAPQRPPSTGSAGGMLSTTDLTVPNGAGNGPV). Position 235 is a phosphoserine (serine 235). Positions 242 to 271 (TGANSVGKVMPTKSPPPPGGGSVGMNSRKP) are disordered. Lysine 249 is subject to N6-acetyllysine. Serine 255 carries the post-translational modification Phosphoserine. The tract at residues 266–283 (MNSRKPDLRVVIPPSSKG) is required for interaction with MAPKs. Residues threonine 304 and threonine 311 each carry the phosphothreonine; by MAPK7 and MAPK14 modification. Residue serine 347 is modified to Phosphoserine; by MAPK7. The span at 382–394 (SNLSINTNQNINI) shows a compositional bias: polar residues. A disordered region spans residues 382–495 (SNLSINTNQN…KRMRMDTWVT (114 aa)). Position 395 is an N6-acetyllysine; alternate (lysine 395). Lysine 395 is covalently cross-linked (Glycyl lysine isopeptide (Lys-Gly) (interchain with G-Cter in SUMO); alternate). At serine 400 the chain carries Phosphoserine; by CDK5. Position 407 is a phosphothreonine (threonine 407). A compositionally biased stretch (pro residues) spans 421–433 (QQPPPQPPQPQPQ). Serine 441 bears the Phosphoserine mark. The span at 441-454 (SPVDSLSSSSSSYD) shows a compositional bias: low complexity. Basic and acidic residues-rich tracts occupy residues 455-465 (GSDREDPRGDF) and 476-495 (NAED…TWVT).

Binds DNA as a homo- or heterodimer. Dimerizes with MEF2D. Interacts with HDAC7. Interacts with PIAS1; the interaction enhances sumoylation. Interacts with HDAC4, HDAC9 and SLC2A4RG. Interacts (via the N-terminal) with MAPK7; the interaction results in the phosphorylation and transcriptional activity of MEF2A. Constitutive phosphorylation on Ser-400 promotes Lys-395 sumoylation thus preventing acetylation at this site. Dephosphorylation on Ser-400 by PPP3CA upon neuron depolarization promotes a switch from sumoylation to acetylation on residue Lys-395 leading to inhibition of dendrite claw differentiation. Phosphorylation on Thr-304 and Thr-311 are the main sites involved in p38 MAPK signaling and activate transcription. Phosphorylated on these sites by MAPK14/p38alpha and MAPK11/p38beta, but not by MAPK13/p38delta nor by MAPK12/p38gamma. Phosphorylation on Ser-400 by CDK5 induced by neurotoxicity inhibits MEF2A transcriptional activation leading to apoptosis of cortical neurons. Phosphorylation on Thr-304, Thr-311 and Ser-347 can be induced by EGF. Post-translationally, sumoylation on Lys-395 is enhanced by PIAS1 and represses transcriptional activity. Phosphorylation on Ser-400 is required for sumoylation. Has no effect on nuclear location nor on DNA binding. Sumoylated with SUMO1 and, to a lesser extent with SUMO2 and SUMO3. PIASx facilitates sumoylation in postsynaptic dendrites in the cerebellar cortex and promotes their morphogenesis. In terms of processing, acetylation on Lys-395 activates transcriptional activity. Acetylated by p300 on several sites in diffentiating myocytes. Acetylation on Lys-4 increases DNA binding and transactivation. Hyperacetylation by p300 leads to enhanced cardiac myocyte growth and heart failure. Proteolytically cleaved in cerebellar granule neurons on several sites by caspase 3 and caspase 7 following neurotoxicity. Preferentially cleaves the CDK5-mediated hyperphosphorylated form which leads to neuron apoptosis and transcriptional inactivation.

The protein resides in the nucleus. Its function is as follows. Transcriptional activator which binds specifically to the MEF2 element, 5'-YTA[AT](4)TAR-3', found in numerous muscle-specific genes. Also involved in the activation of numerous growth factor- and stress-induced genes. Mediates cellular functions not only in skeletal and cardiac muscle development, but also in neuronal differentiation and survival. Plays diverse roles in the control of cell growth, survival and apoptosis via p38 MAPK signaling in muscle-specific and/or growth factor-related transcription. In cerebellar granule neurons, phosphorylated and sumoylated MEF2A represses transcription of NUR77 promoting synaptic differentiation. Associates with chromatin to the ZNF16 promoter. This is Myocyte-specific enhancer factor 2A (Mef2a) from Rattus norvegicus (Rat).